The primary structure comprises 433 residues: 3-phosphoshikimate 1-carboxyvinyltransferase (433 aa).

Residues lysine 22, serine 23, and arginine 27 each contribute to the 3-phosphoshikimate site. Position 22 (lysine 22) interacts with phosphoenolpyruvate. Residues glycine 94 and arginine 123 each contribute to the phosphoenolpyruvate site. Residues serine 168, glutamine 170, aspartate 319, and lysine 346 each coordinate 3-phosphoshikimate. Residue glutamine 170 participates in phosphoenolpyruvate binding. Aspartate 319 serves as the catalytic Proton acceptor. Positions 350 and 392 each coordinate phosphoenolpyruvate.

This sequence belongs to the EPSP synthase family. Monomer.

The protein resides in the cytoplasm. The catalysed reaction is 3-phosphoshikimate + phosphoenolpyruvate = 5-O-(1-carboxyvinyl)-3-phosphoshikimate + phosphate. It functions in the pathway metabolic intermediate biosynthesis; chorismate biosynthesis; chorismate from D-erythrose 4-phosphate and phosphoenolpyruvate: step 6/7. In terms of biological role, catalyzes the transfer of the enolpyruvyl moiety of phosphoenolpyruvate (PEP) to the 5-hydroxyl of shikimate-3-phosphate (S3P) to produce enolpyruvyl shikimate-3-phosphate and inorganic phosphate. The protein is 3-phosphoshikimate 1-carboxyvinyltransferase of Roseiflexus sp. (strain RS-1).